The sequence spans 131 residues: uncharacterized protein (131 aa).

The CCHC-type; degenerate zinc finger occupies Val64–Gly81.

This is an uncharacterized protein from Homo sapiens (Human).